Here is a 208-residue protein sequence, read N- to C-terminus: Large ribosomal subunit protein uL4 (208 aa).

It belongs to the universal ribosomal protein uL4 family. In terms of assembly, part of the 50S ribosomal subunit.

In terms of biological role, one of the primary rRNA binding proteins, this protein initially binds near the 5'-end of the 23S rRNA. It is important during the early stages of 50S assembly. It makes multiple contacts with different domains of the 23S rRNA in the assembled 50S subunit and ribosome. Forms part of the polypeptide exit tunnel. The protein is Large ribosomal subunit protein uL4 of Solibacter usitatus (strain Ellin6076).